The sequence spans 216 residues: Uracil phosphoribosyltransferase (216 aa).

5-phospho-alpha-D-ribose 1-diphosphate is bound by residues Arg-84, Arg-109, and 137–145; that span reads DPMLATGNT. Residues Ile-202 and 207 to 209 contribute to the uracil site; that span reads GDA. Residue Asp-208 participates in 5-phospho-alpha-D-ribose 1-diphosphate binding.

This sequence belongs to the UPRTase family. The cofactor is Mg(2+).

It catalyses the reaction UMP + diphosphate = 5-phospho-alpha-D-ribose 1-diphosphate + uracil. The protein operates within pyrimidine metabolism; UMP biosynthesis via salvage pathway; UMP from uracil: step 1/1. Its activity is regulated as follows. Allosterically activated by GTP. Catalyzes the conversion of uracil and 5-phospho-alpha-D-ribose 1-diphosphate (PRPP) to UMP and diphosphate. This is Uracil phosphoribosyltransferase from Synechocystis sp. (strain ATCC 27184 / PCC 6803 / Kazusa).